The sequence spans 257 residues: Adenylate kinase (257 aa).

ATP is bound at residue 52 to 57 (GAGKGT). The interval 72 to 101 (ATGDMLRSQVAKKTELGKEAKKIMDQGGLV) is NMP. AMP-binding positions include threonine 73, arginine 78, 99–101 (GLV), 128–131 (GFPR), and glutamine 135. The segment at 169–206 (GRLVHPASGRSYHKIFNPPKNEMLDDITGEPLIQRSDD) is LID. ATP is bound by residues arginine 170 and 179–180 (SY). AMP-binding residues include arginine 203 and arginine 214. Glutamine 242 lines the ATP pocket.

The protein belongs to the adenylate kinase family. AK2 subfamily. As to quaternary structure, monomer.

The protein localises to the cytoplasm. The protein resides in the cytosol. Its subcellular location is the mitochondrion intermembrane space. The catalysed reaction is AMP + ATP = 2 ADP. Functionally, catalyzes the reversible transfer of the terminal phosphate group between ATP and AMP. Plays an important role in cellular energy homeostasis and in adenine nucleotide metabolism. Adenylate kinase activity is critical for regulation of the phosphate utilization and the AMP de novo biosynthesis pathways. This is Adenylate kinase (adk1) from Aspergillus clavatus (strain ATCC 1007 / CBS 513.65 / DSM 816 / NCTC 3887 / NRRL 1 / QM 1276 / 107).